Consider the following 424-residue polypeptide: GTPase Obg (424 aa).

Positions 1–158 (MFIDTAKIFV…RWIKLELKLL (158 aa)) constitute an Obg domain. The OBG-type G domain maps to 159–331 (ADVGLIGFPN…LMKEAARLLS (173 aa)). GTP is bound by residues 165 to 172 (GFPNVGKS), 190 to 194 (FTTLK), 212 to 215 (DIPG), 282 to 285 (NKSD), and 312 to 314 (SAA). Residues Ser-172 and Thr-192 each contribute to the Mg(2+) site. The region spanning 345–424 (RFIEEEKRFT…LNDFEFDFLL (80 aa)) is the OCT domain.

This sequence belongs to the TRAFAC class OBG-HflX-like GTPase superfamily. OBG GTPase family. As to quaternary structure, monomer. Requires Mg(2+) as cofactor.

The protein localises to the cytoplasm. Its function is as follows. An essential GTPase which binds GTP, GDP and possibly (p)ppGpp with moderate affinity, with high nucleotide exchange rates and a fairly low GTP hydrolysis rate. Plays a role in control of the cell cycle, stress response, ribosome biogenesis and in those bacteria that undergo differentiation, in morphogenesis control. The polypeptide is GTPase Obg (Clostridium botulinum (strain Okra / Type B1)).